The sequence spans 289 residues: Protease HtpX homolog (289 aa).

Transmembrane regions (helical) follow at residues 9–29 and 31–51; these read TGVL…LIGG and GGMI…YWFS. His-133 contacts Zn(2+). Glu-134 is a catalytic residue. His-137 provides a ligand contact to Zn(2+). 2 helical membrane-spanning segments follow: residues 143–163 and 182–202; these read TLIQ…VDFA and IGLI…QLAI. Glu-207 contributes to the Zn(2+) binding site.

It belongs to the peptidase M48B family. Zn(2+) serves as cofactor.

It is found in the cell membrane. The chain is Protease HtpX homolog from Pyrococcus abyssi (strain GE5 / Orsay).